We begin with the raw amino-acid sequence, 255 residues long: Imidazole glycerol phosphate synthase subunit HisF (255 aa).

Active-site residues include D12 and D131.

It belongs to the HisA/HisF family. Heterodimer of HisH and HisF.

It localises to the cytoplasm. It carries out the reaction 5-[(5-phospho-1-deoxy-D-ribulos-1-ylimino)methylamino]-1-(5-phospho-beta-D-ribosyl)imidazole-4-carboxamide + L-glutamine = D-erythro-1-(imidazol-4-yl)glycerol 3-phosphate + 5-amino-1-(5-phospho-beta-D-ribosyl)imidazole-4-carboxamide + L-glutamate + H(+). Its pathway is amino-acid biosynthesis; L-histidine biosynthesis; L-histidine from 5-phospho-alpha-D-ribose 1-diphosphate: step 5/9. Functionally, IGPS catalyzes the conversion of PRFAR and glutamine to IGP, AICAR and glutamate. The HisF subunit catalyzes the cyclization activity that produces IGP and AICAR from PRFAR using the ammonia provided by the HisH subunit. This chain is Imidazole glycerol phosphate synthase subunit HisF, found in Sphingopyxis alaskensis (strain DSM 13593 / LMG 18877 / RB2256) (Sphingomonas alaskensis).